The sequence spans 387 residues: ATP-dependent Clp protease proteolytic subunit-related protein 1, chloroplastic (387 aa).

The transit peptide at 1 to 41 (MATALVSPLTSQLNHEAVCSKFVLPKSPFMSGSKLFSSNMP) directs the protein to the chloroplast. Positions 355 to 365 (QDSSFEKRDYD) are enriched in basic and acidic residues. The segment at 355-387 (QDSSFEKRDYDGTLAQRAMRPGGGSPAAPAGLR) is disordered.

This sequence belongs to the peptidase S14 family. Component of the chloroplastic Clp protease core complex which consist of at least 16 proteins: CLPP4 (3 copies), CLPP5 (3 copies), CLPR4 (2 copies), ClpP1 (1 copy), CLPP6 (1 copy), CLPR2 (1 copy), CLPT1 (1 copy), CLPT2 (1 copy) and 3 copies of CLPP3 and/or CLPR1 and/or CLPR3. The core complex is organized in two heptameric rings, one containing CLPP3,4,5,6 in a 1:2:3:1 ratio and the other CLPP1 and CLPR1,2,3,4 in a 3:1:1:1:1 ratio.

Its subcellular location is the plastid. It is found in the chloroplast stroma. In terms of biological role, required for chloroplast development and differentiation. This is ATP-dependent Clp protease proteolytic subunit-related protein 1, chloroplastic from Arabidopsis thaliana (Mouse-ear cress).